Consider the following 493-residue polypeptide: Guanosine-5'-triphosphate,3'-diphosphate pyrophosphatase (493 aa).

The protein belongs to the GppA/Ppx family. GppA subfamily.

It catalyses the reaction guanosine 3'-diphosphate 5'-triphosphate + H2O = guanosine 3',5'-bis(diphosphate) + phosphate + H(+). Its pathway is purine metabolism; ppGpp biosynthesis; ppGpp from GTP: step 2/2. In terms of biological role, catalyzes the conversion of pppGpp to ppGpp. Guanosine pentaphosphate (pppGpp) is a cytoplasmic signaling molecule which together with ppGpp controls the 'stringent response', an adaptive process that allows bacteria to respond to amino acid starvation, resulting in the coordinated regulation of numerous cellular activities. The protein is Guanosine-5'-triphosphate,3'-diphosphate pyrophosphatase of Salmonella heidelberg (strain SL476).